Consider the following 305-residue polypeptide: 2-pyrone-4,6-dicarbaxylate hydrolase (305 aa).

Substrate-binding positions include 32–34, Tyr-50, Thr-78, Arg-125, Arg-131, Tyr-158, and His-182; that span reads HCH. Asp-258 functions as the Proton acceptor in the catalytic mechanism. Residue Asn-263 participates in substrate binding.

This sequence belongs to the metallo-dependent hydrolases superfamily. PDC hydrolase family.

The catalysed reaction is 2-oxo-2H-pyran-4,6-dicarboxylate + H2O = (1E)-4-oxobut-1-ene-1,2,4-tricarboxylate + H(+). Strongly inhibited by 1 mM Zn(2+), Cu(2+), Mn(2+) and Co(2+) ions. Also inhibited by 5,5'-dithiobis(2-nitrobenzoic acid) (Ellman reagent) in vitro. Involved in the degradation of aromatic compounds via the protocatechuate 4,5-cleavage pathway. Catalyzes the hydrolysis of 2-pyrone-4,6-dicarboxylate (PDC) to oxalomesaconate (OMA). Also catalyzes the reverse reaction. The protein is 2-pyrone-4,6-dicarbaxylate hydrolase of Comamonas testosteroni (Pseudomonas testosteroni).